A 136-amino-acid polypeptide reads, in one-letter code: MPREFTRSDRVSDAIQRLLAQVIPQEVRDPRLGMVNINAVAVSRDMAFAKVYVTFVGVTDEPKSLEGIGILNKASGFLRSFVARELSMRTVPKLQFIYDKTSIRGQELSSLIDRAIAEDRLHPQGDQTDDQQEGRD.

Belongs to the RbfA family. In terms of assembly, monomer. Binds 30S ribosomal subunits, but not 50S ribosomal subunits or 70S ribosomes.

Its subcellular location is the cytoplasm. One of several proteins that assist in the late maturation steps of the functional core of the 30S ribosomal subunit. Associates with free 30S ribosomal subunits (but not with 30S subunits that are part of 70S ribosomes or polysomes). Required for efficient processing of 16S rRNA. May interact with the 5'-terminal helix region of 16S rRNA. This Cellvibrio japonicus (strain Ueda107) (Pseudomonas fluorescens subsp. cellulosa) protein is Ribosome-binding factor A.